A 691-amino-acid polypeptide reads, in one-letter code: Competence protein ComA (691 aa).

Transmembrane regions (helical) follow at residues 183 to 203, 220 to 240, 280 to 300, 322 to 342, 347 to 367, and 396 to 416; these read HLVS…AWLA, WVLA…GFSV, LAVL…LIWA, VLSL…SPLV, IPWF…VPFA, and VAAA…LLLL.

To B.subtilis ComEC, H.influenzae REC2, and E.coli YcaI.

It localises to the cell inner membrane. In terms of biological role, essential for natural transformation. Could be a transporter involved in DNA uptake. The polypeptide is Competence protein ComA (comA) (Neisseria gonorrhoeae).